We begin with the raw amino-acid sequence, 355 residues long: Poly(3-hydroxyalkanoate) polymerase subunit PhaC (355 aa).

In terms of domain architecture, AB hydrolase-1 spans 68–333 (PLLIVYALVN…LAFPGGHIGI (266 aa)). Cysteine 148 is a catalytic residue.

This sequence belongs to the PHA/PHB synthase family. Type III PhaC subfamily. In terms of assembly, forms a heterodimer with PhaE, which may multimerize in the presence of 3-hydroxybutyryl-CoA.

The protein resides in the cytoplasm. It catalyses the reaction (3R)-3-hydroxybutanoyl-CoA + [(3R)-hydroxybutanoate](n) = [(3R)-hydroxybutanoate](n+1) + CoA. The protein operates within biopolymer metabolism; poly-(R)-3-hydroxybutanoate biosynthesis. Its function is as follows. Polymerizes D(-)-3-hydroxybutyryl-CoA to create PHB which consists of thousands of hydroxybutyrate molecules linked end to end. PHB serves as an intracellular energy reserve material when cells grow under conditions of nutrient limitation. This is Poly(3-hydroxyalkanoate) polymerase subunit PhaC from Thiocystis violacea.